The following is a 722-amino-acid chain: Catalase B (722 aa).

The N-terminal stretch at 1-15 (MRALGLVGLVGVANA) is a signal peptide. Active-site residues include His-100 and Asn-173. Tyr-388 lines the heme pocket.

This sequence belongs to the catalase family. It depends on heme as a cofactor.

Its subcellular location is the secreted. It catalyses the reaction 2 H2O2 = O2 + 2 H2O. Its function is as follows. Occurs in almost all aerobically respiring organisms and serves to protect cells from the toxic effects of hydrogen peroxide. In Emericella nidulans (strain FGSC A4 / ATCC 38163 / CBS 112.46 / NRRL 194 / M139) (Aspergillus nidulans), this protein is Catalase B (catB).